Here is a 197-residue protein sequence, read N- to C-terminus: Probable UbiX-like flavin prenyltransferase (197 aa).

FMN-binding positions include glycine 9–threonine 11, serine 36, serine 87–threonine 90, and arginine 122.

It belongs to the UbiX/PAD1 family. YclB subfamily. Homododecamer.

The enzyme catalyses dimethylallyl phosphate + FMNH2 = prenylated FMNH2 + phosphate. Its function is as follows. Involved in the non-oxidative decarboxylation and detoxification of phenolic derivatives under both aerobic and anaerobic conditions. Flavin prenyltransferase that catalyzes the synthesis of the prenylated FMN cofactor (prenyl-FMN) for phenolic acid decarboxylase. The protein is Probable UbiX-like flavin prenyltransferase of Escherichia coli O157:H7.